We begin with the raw amino-acid sequence, 115 residues long: Meiotically up-regulated gene 168 protein (115 aa).

Residues 82–115 (SVSPVHTKAEEPGLGLTPMNSADFSNKIASRYRS) form a disordered region. The span at 99-109 (PMNSADFSNKI) shows a compositional bias: polar residues.

The protein resides in the nucleus. Functionally, has a role in meiosis. In Schizosaccharomyces pombe (strain 972 / ATCC 24843) (Fission yeast), this protein is Meiotically up-regulated gene 168 protein (mug168).